Reading from the N-terminus, the 146-residue chain is Ribonuclease VapC41 (146 aa).

Positions 3–142 (LCDTNIWLAL…FTQYGGIELR (140 aa)) constitute a PINc domain. Asp5 and Asp112 together coordinate Mg(2+).

Belongs to the PINc/VapC protein family. Mg(2+) serves as cofactor.

Toxic component of a type II toxin-antitoxin (TA) system. An RNase. Its toxic effect is neutralized by coexpression with cognate antitoxin VapB41. The polypeptide is Ribonuclease VapC41 (Mycobacterium tuberculosis (strain CDC 1551 / Oshkosh)).